The sequence spans 295 residues: Bifunctional protein FolD (295 aa).

Residues 165–167 (GRS), serine 190, and isoleucine 231 each bind NADP(+).

It belongs to the tetrahydrofolate dehydrogenase/cyclohydrolase family. Homodimer.

It catalyses the reaction (6R)-5,10-methylene-5,6,7,8-tetrahydrofolate + NADP(+) = (6R)-5,10-methenyltetrahydrofolate + NADPH. It carries out the reaction (6R)-5,10-methenyltetrahydrofolate + H2O = (6R)-10-formyltetrahydrofolate + H(+). It participates in one-carbon metabolism; tetrahydrofolate interconversion. In terms of biological role, catalyzes the oxidation of 5,10-methylenetetrahydrofolate to 5,10-methenyltetrahydrofolate and then the hydrolysis of 5,10-methenyltetrahydrofolate to 10-formyltetrahydrofolate. In Nitrosomonas europaea (strain ATCC 19718 / CIP 103999 / KCTC 2705 / NBRC 14298), this protein is Bifunctional protein FolD.